A 51-amino-acid polypeptide reads, in one-letter code: Large ribosomal subunit protein eL39 (51 aa).

Belongs to the eukaryotic ribosomal protein eL39 family.

The chain is Large ribosomal subunit protein eL39 from Hyperthermus butylicus (strain DSM 5456 / JCM 9403 / PLM1-5).